A 311-amino-acid chain; its full sequence is Olfactory receptor 4S2 (311 aa).

The Extracellular segment spans residues 1–23 (MEKINNVTEFIFWGLSQSPEIEK). Residue N6 is glycosylated (N-linked (GlcNAc...) asparagine). Residues 24 to 47 (VCFVVFSFFYIIILLGNLLIMLTV) form a helical membrane-spanning segment. The Cytoplasmic portion of the chain corresponds to 48–55 (CLSNLFKS). Residues 56–77 (PMYFFLSFLSFVDICYSSVTAP) form a helical membrane-spanning segment. At 78-98 (KMIVDLLAKDKTISYVGCMLQ) the chain is on the extracellular side. C95 and C187 are oxidised to a cystine. A helical membrane pass occupies residues 99–118 (LFGVHFFGCTEIFILTVMAY). Topologically, residues 119-137 (DRYVAICKPLHYMTIMNRE) are cytoplasmic. The chain crosses the membrane as a helical span at residues 138–156 (TCNKMLLGTWVGGFLHSII). Topologically, residues 157-193 (QVALVVQLPFCGPNEIDHYFCDVHPVLKLACTETYIV) are extracellular. Residues 194-217 (GVVVTANSGTIALGSFVILLISYS) traverse the membrane as a helical segment. The Cytoplasmic segment spans residues 218-233 (IILVSLRKQSAEGRRK). A helical transmembrane segment spans residues 234-256 (ALSTCGSHIAMVVIFFGPCTFMY). Topologically, residues 257-267 (MRPDTTFSEDK) are extracellular. Residues 268-287 (MVAVFYTIITPMLNPLIYTL) traverse the membrane as a helical segment. The Cytoplasmic portion of the chain corresponds to 288 to 311 (RNAEVKNAMKKLWGRNVFLEAKGK).

It belongs to the G-protein coupled receptor 1 family.

The protein localises to the cell membrane. Odorant receptor. This is Olfactory receptor 4S2 (OR4S2) from Homo sapiens (Human).